A 201-amino-acid polypeptide reads, in one-letter code: 3-isopropylmalate dehydratase small subunit (201 aa).

The protein belongs to the LeuD family. LeuD type 1 subfamily. In terms of assembly, heterodimer of LeuC and LeuD.

The enzyme catalyses (2R,3S)-3-isopropylmalate = (2S)-2-isopropylmalate. The protein operates within amino-acid biosynthesis; L-leucine biosynthesis; L-leucine from 3-methyl-2-oxobutanoate: step 2/4. Its function is as follows. Catalyzes the isomerization between 2-isopropylmalate and 3-isopropylmalate, via the formation of 2-isopropylmaleate. This Glaesserella parasuis serovar 5 (strain SH0165) (Haemophilus parasuis) protein is 3-isopropylmalate dehydratase small subunit.